We begin with the raw amino-acid sequence, 56 residues long: Small ribosomal subunit protein uS14 (56 aa).

Ser9 is subject to Phosphoserine. At Arg12 the chain carries Omega-N-methylarginine. Residues Cys21, Cys24, Cys39, and Cys42 each contribute to the Zn(2+) site. Position 48 is an N6-acetyllysine (Lys48).

The protein belongs to the universal ribosomal protein uS14 family. In terms of assembly, component of the 40S small ribosomal subunit. Zn(2+) is required as a cofactor.

It is found in the cytoplasm. The protein resides in the cytosol. It localises to the rough endoplasmic reticulum. Its function is as follows. Component of the small ribosomal subunit. The ribosome is a large ribonucleoprotein complex responsible for the synthesis of proteins in the cell. The chain is Small ribosomal subunit protein uS14 (RPS29) from Sus scrofa (Pig).